The following is a 690-amino-acid chain: Sodium-dependent phosphate transport protein 2B (690 aa).

The segment at 1–42 (MAPWPELGDAQPNPDKYLEGAAGQQPTAPDKSKETNKTDNTE) is disordered. The Cytoplasmic segment spans residues 1–100 (MAPWPELGDA…ILCFFQGIGR (100 aa)). The segment covering 30–40 (DKSKETNKTDN) has biased composition (basic and acidic residues). The helical transmembrane segment at 101 to 121 (LILLLGFLYFFVCSLDILSSA) threads the bilayer. Topologically, residues 122-135 (FQLVGGKMAGQFFS) are extracellular. The chain crosses the membrane as a helical span at residues 136 to 156 (NSSIMSNPLLGLVIGVLVTVL). Over 157 to 212 (VQSSSTSTSIVVSMVSSSLLTVRAAIPIIMGANIGTSITNTIVALMQVGDRSEFRR) the chain is Cytoplasmic. The helical transmembrane segment at 213–233 (AFAGATVHDFFNWLSVLVLLP) threads the bilayer. At 234–362 (VEVATHYLEI…IFVNFHLPDL (129 aa)) the chain is on the extracellular side. Asn295, Asn308, Asn313, Asn321, and Asn340 each carry an N-linked (GlcNAc...) asparagine glycan. Cys303 and Cys350 are disulfide-bonded. A helical transmembrane segment spans residues 363 to 383 (AVGTILLILSLLVLCGCLIMI). Residues 384–407 (VKILGSVLKGQVATVIKKTINTDF) are Cytoplasmic-facing. The helical transmembrane segment at 408 to 428 (PFPFAWLTGYLAILVGAGMTF) threads the bilayer. At 429-485 (IVQSSSVFTSALTPLIGIGVITIERAYPLTLGSNIGTTTTAILAALASPGNALRSSL) the chain is on the extracellular side. Residues 486 to 506 (QIALCHFFFNISGILLWYPIP) form a helical membrane-spanning segment. Topologically, residues 507-525 (FTRLPIRMAKGLGNISAKY) are cytoplasmic. Residues 526–546 (RWFAVFYLIIFFFLIPLTVFG) traverse the membrane as a helical segment. Residues 547-552 (LSLAGW) are Extracellular-facing. The chain crosses the membrane as a helical span at residues 553–573 (RVLVGVGVPVVFIIILVLCLR). Topologically, residues 574 to 689 (LLQSRCPRVL…ASDSKTECTA (116 aa)) are cytoplasmic.

It belongs to the SLC34A transporter family. In terms of tissue distribution, highly expressed in lung. Also detected in pancreas, kidney, small intestine, ovary, testis, prostate and mammary gland. In lung, it is found in alveolar type II cells but not in bronchiolar epithelium.

The protein resides in the apical cell membrane. The enzyme catalyses 3 Na(+)(out) + phosphate(out) = 3 Na(+)(in) + phosphate(in). Functionally, involved in actively transporting phosphate into cells via Na(+) cotransport. In Homo sapiens (Human), this protein is Sodium-dependent phosphate transport protein 2B (SLC34A2).